The chain runs to 326 residues: Peroxidase 6 (326 aa).

Positions 1 to 20 (MKSFGLCLFILVSSPCLLQA) are cleaved as a signal peptide. N-linked (GlcNAc...) asparagine glycosylation occurs at Asn-21. Cystine bridges form between Cys-31–Cys-112, Cys-64–Cys-69, Cys-118–Cys-318, and Cys-197–Cys-228. His-62 serves as the catalytic Proton acceptor. Residues Asp-63, Val-66, Gly-68, Asp-70, and Ser-72 each contribute to the Ca(2+) site. N-linked (GlcNAc...) asparagine glycosylation occurs at Asn-163. His-190 is a binding site for heme b. Thr-191 is a binding site for Ca(2+). N-linked (GlcNAc...) asparagine glycans are attached at residues Asn-206 and Asn-230. 3 residues coordinate Ca(2+): Asp-242, Thr-245, and Asp-250. A glycan (N-linked (GlcNAc...) asparagine) is linked at Asn-274.

This sequence belongs to the peroxidase family. Classical plant (class III) peroxidase subfamily. Heme b is required as a cofactor. It depends on Ca(2+) as a cofactor.

Its subcellular location is the secreted. The catalysed reaction is 2 a phenolic donor + H2O2 = 2 a phenolic radical donor + 2 H2O. Functionally, removal of H(2)O(2), oxidation of toxic reductants, biosynthesis and degradation of lignin, suberization, auxin catabolism, response to environmental stresses such as wounding, pathogen attack and oxidative stress. These functions might be dependent on each isozyme/isoform in each plant tissue. The chain is Peroxidase 6 (PER6) from Arabidopsis thaliana (Mouse-ear cress).